Reading from the N-terminus, the 323-residue chain is Beta-ketoacyl-[acyl-carrier-protein] synthase III (323 aa).

Active-site residues include Cys-112 and His-248. The interval 249 to 253 (QANRR) is ACP-binding. Asn-278 is an active-site residue.

It belongs to the thiolase-like superfamily. FabH family. In terms of assembly, homodimer.

It localises to the cytoplasm. It carries out the reaction malonyl-[ACP] + acetyl-CoA + H(+) = 3-oxobutanoyl-[ACP] + CO2 + CoA. It functions in the pathway lipid metabolism; fatty acid biosynthesis. Functionally, catalyzes the condensation reaction of fatty acid synthesis by the addition to an acyl acceptor of two carbons from malonyl-ACP. Catalyzes the first condensation reaction which initiates fatty acid synthesis and may therefore play a role in governing the total rate of fatty acid production. Possesses both acetoacetyl-ACP synthase and acetyl transacylase activities. Its substrate specificity determines the biosynthesis of branched-chain and/or straight-chain of fatty acids. The chain is Beta-ketoacyl-[acyl-carrier-protein] synthase III from Streptococcus agalactiae serotype Ia (strain ATCC 27591 / A909 / CDC SS700).